Reading from the N-terminus, the 2885-residue chain is MVSMQFVLQPLPGSDDQFIERIREVSDKVNRFGYGSHRIFEQLKIPVKEVVIGPAHIGVLLEDGKAFRVSFSINSEKLDLTKSDAKCSTSGGSGTASASKAPSSSRPMARSRARLLRATGRSNSTGQGSGSRSTGVIIGGSTSSRPLVTVPATYVPEELISQAEVVLQGKSRNLIIRELQRTNLDVNLAVNNLLSRDDEEAEDTEEGADNYVPEDLISLLDNGFSGDNNSVIIDPSDGLFSEEIFSNYSSIRNLLFDRIRSERSNANANAADSNQSTTRSTSSGTALTGNSGLSAQISVNADREAFSRWRDRQYYGPRRWISKDDYTWEKDADSKKKEPSPMLSPIWISEELQPWPEKSSVRFKTIGALYSEFIALSESGDLYQWRWSDAEPYKSETENVYHPKTVSLNIVERVELISANFIRCSVVTETNRVATWMDEQLGYIGAKLEHSCCAFNEFISDSITKIYVCSLYTVVKTESNNIYWWGVLPFDQRRFLWDKFRTKTKKPFKVVATDINVGAQVIMKKCPMYQSGSIGFTCSNGVPKVGQLLNSVWTFTDVCRMKIININTNSGVDKSQAAGNNLNAHGITPDKDLPKSTAMPSTGSSKNGQSFSNSKESTDRIDMPPPPSPASSTCSDTGSVTSHKRTKRATTKEDSNAPQEGRKDEELWEVKDVVFVEDKVGPVGKVLKVDGDFVAVRFPAINAAAVAAAAAATSSTSNTASTSKEEGKEDDWQQCRLLRREDVQIFRTAMSTRGPDWLQKQPKKINVGGDAAGAQILTLAVDSRGIHVIKKVLGKIHYSLYNLYNCKQEQNCLFPTDCNSFIGSTPGNILMACNDDCSGNSSTIVLRDGNGALYPLAKDCLGSIKDPQWFDLPPVKSITMSTISLPAMLSGVNLKSKVCMTALLFDTQKLMPHILRCDVKNSFAALGRLEREDQADTALVVEERCDGARNIFHACVIMCAPSSNKDSPPDSPSGGVEKKSLVGLSVARSIPTVSTSAYVSSIAFGASASSSNENSSFATMSSSAAGSASSTSRDNRTNLRDMMNRLINSDQAEQSGSQPMATNNEDHAYIPWPAETPAASNLSASSSQNVSDSIEDDISKIIPSSSQSSMLSNIKLGSPTYTFDLAQRREHALTILQQMCVSPALRPYLCHMLSTKDAQGQTPFMLSVSCRAYEAGIILLNTILMLSEQDPQLKEAMIFPNGSPADQSPLHVICYNDTCSFTWTGADHINQNIFECKTCGLTGSLCCCTECARVCHKGHDCKLKRTAPTAYCDCWEKCKCKALIAGNLTKRFALLCKLVSCTDLVTKFNSKGESILLFLIQTVGRQIVEQRQYRFSVRVRNVSTAATGATGNNSVISNRKTSAAEIDNDMPDHDLEPPKFARKALERLLIDWNAVRSMIMSGAERGDVPNPAGSASENSNSEGFNMFIQTQHGSTLLDKFTHSLIVKCTSDHLDTLLLTLVRELQNASVSNRSKEAEEVVRRFVRSVARVFVIFNLEKQPNPEKRKSHSSCNKYVQSCVKVFQTLHKISIEELCEVSEALIAPVRLGVVRPTAPFTMSSSNLDNSDDLFSVDPLAPSNVESPSEQILVHDAGNDQSANFNIQQNYDVVAMETIRDASESEEVINREANSHNQDDELIENQRNEDGMQDDESDNDFTFNDAETESDSDDNQSNQEVQRSVQAGATVGSENDIGVLFLEDESGDSSAQEEDGSEDGESDDQSDEFNFNEQQLERRSTNSNARSDLAPQTMQWAIRSRDTARSSVRVPTGSNMVFIDPMALRRSTVPASTTVTTPSIEPHTMATTASNLARAFGITIRQISELISILSYNVLNDIETSLKIQNDEAIAVQAFVEKRLKATWDWMFTVMDGTEAQLKFGAYLTNYTDPNHPLHPLNLSAQASSSQTPAPATSSSVNGVNIMGSNSRRDFFTYCLSLMRSHTSEHRDALPVLDITALRHIAYVLDAFVYYMRNDSGFYDKQDTISGRINNLSPMTESYDTDDELANLEEFNADVQMSASSMPSGSQGTRRHAFFARSESTLSLGCSAPEGFELPLDMAMPLADKPHLLQPNSKRQELFANLPLLVTTNANNSGATNDGDGGSIFDYTPTRLGFSNSLKRNERVYETVPIDSSKTGDGNVTNKAEGSTDSNIYVQLKKKQGSDDFKSHKEADGNQSKYEKVVLMETDDSLPSTSKSTEALMATRPEVIIAPNKASVSPATAARSVIVLAGGSCLKTIDSDINNYSASNLSTAEQAKCDTQYQKSTSDHLLLFPARGSQFYQSNFSELPSWNFLLSRWKLTLDLFGRVFMDDVGMEHGSVLPELRGFPVKEMRFRRHMEKLRNGQQRDLVLCKLERNRESLIVQTFKELNTQFGNQSRRIQPPITFNRVKVTFKDEPGEGSGVARSFYTSIAEALLASAKIPNLESVQVGTNHSKYVVPFSSILRSRTVSGSSRDQSTLQRRGSNSKILWRSARERKALNLDARPYTPPNSSDNATPESLNDHLSVHLQQIGERLYPKIHSINQTHAPKITGMLLEIPTPQLLSVISSDETLRQKVNEAIEIITFKQKSETSAQSSQPKKSPSVVVVDPVDDDNEPLFYSPGKRGFYTPRQGFASFERINAFRNIGRLIGLCLLQNELLPLFLQRHVLKYILGRKIKFHDLAFFDPALYESFRQIIQNAQTKEGEETINRMELCFVIDLMKEEGCGNRELIPGGRDVAVTSSNIFEYVRRYTEYRLIKSQEKALEALKDGVFDVLPDNSMINLTAEDLRLLLNGVGDINVSTLISYTTFNDESSEGPDKLLKFKKWFWSIVEKMNIMERQDLVYFWTGSPALPASEEGFQPLPSVTIRPADDSHLPTANTCISRLYIPLYSSKSILRSKMLMAIKSKNFGFV.

A disordered region spans residues 83-138 (SDAKCSTSGGSGTASASKAPSSSRPMARSRARLLRATGRSNSTGQGSGSRSTGVII). 2 stretches are compositionally biased toward low complexity: residues 95-108 (TASA…SRPM) and 116-138 (LRAT…GVII). A UBA domain is found at 154–196 (YVPEELISQAEVVLQGKSRNLIIRELQRTNLDVNLAVNNLLSR). Residues 266 to 276 (ANANAADSNQS) are compositionally biased toward low complexity. Disordered stretches follow at residues 266-291 (ANAN…TGNS), 580-664 (NNLN…GRKD), and 711-731 (AATS…KEDD). 2 stretches are compositionally biased toward polar residues: residues 277–291 (TTRS…TGNS) and 598–615 (AMPS…SNSK). A phosphoserine mark is found at S628 and S631. The segment covering 650–664 (TTKEDSNAPQEGRKD) has biased composition (basic and acidic residues). Over residues 711–722 (AATSSTSNTAST) the composition is skewed to low complexity. Phosphoserine is present on S967. Residues 1008 to 1032 (ASSSNENSSFATMSSSAAGSASSTS) show a composition bias toward low complexity. The tract at residues 1008 to 1035 (ASSSNENSSFATMSSSAAGSASSTSRDN) is disordered. The UBR-type zinc-finger motif lies at 1217 to 1285 (DTCSFTWTGA…EKCKCKALIA (69 aa)). Position 1362 is a phosphoserine (S1362). The interval 1642-1761 (NEDGMQDDES…IRSRDTARSS (120 aa)) is disordered. Polar residues predominate over residues 1669–1681 (NQSNQEVQRSVQA). Over residues 1696-1721 (LEDESGDSSAQEEDGSEDGESDDQSD) the composition is skewed to acidic residues. Positions 1735 to 1749 (TNSNARSDLAPQTMQ) are enriched in polar residues. The residue at position 2037 (S2037) is a Phosphoserine. Positions 2124–2143 (IDSSKTGDGNVTNKAEGSTD) are disordered. S2183 is subject to Phosphoserine. A disordered region spans residues 2473 to 2492 (NLDARPYTPPNSSDNATPES). Residues 2482–2492 (PNSSDNATPES) are compositionally biased toward polar residues. Residues 2484–2561 (SSDNATPESL…AIEIITFKQK (78 aa)) form the PABC domain. Phosphoserine is present on S2574. The HECT domain occupies 2782–2885 (FNDESSEGPD…AIKSKNFGFV (104 aa)). C2854 serves as the catalytic Glycyl thioester intermediate.

It belongs to the UBR5 family.

The protein resides in the nucleus. It is found in the cytoplasm. It carries out the reaction S-ubiquitinyl-[E2 ubiquitin-conjugating enzyme]-L-cysteine + [acceptor protein]-L-lysine = [E2 ubiquitin-conjugating enzyme]-L-cysteine + N(6)-ubiquitinyl-[acceptor protein]-L-lysine.. It participates in protein modification; protein ubiquitination. Functionally, E3 ubiquitin-protein ligase which accepts ubiquitin from an E2 ubiquitin-conjugating enzyme in the form of a thioester and then directly transfers the ubiquitin to targeted substrate. Required for regulation of cell proliferation in imaginal disks and germ cells. Acts as a negative regulator of hh, ci and dpp expression in the anterior of the eye disk. Acts as a positive regulator of the canonical Wnt signaling pathway by mediating ubiquitination and degradation of gro. Catalyzes 'Lys-63'-linked polyubiquitination of akirin, thereby activating the immune deficiency pathway (Imd). The sequence is that of E3 ubiquitin-protein ligase hyd (hyd) from Drosophila melanogaster (Fruit fly).